Here is a 162-residue protein sequence, read N- to C-terminus: RxLR effector protein PITG_06094 (162 aa).

The signal sequence occupies residues 1-20; the sequence is MRLSFILAATLTGLLACATA. A RxLR-dEER motif is present at residues 51-91; that stretch reads RFLRAYNDAEDDSEDPKNVKNTVDAKPADESEDSELSEEER. The disordered stretch occupies residues 56–88; sequence YNDAEDDSEDPKNVKNTVDAKPADESEDSELSE.

Belongs to the RxLR effector family.

The protein localises to the secreted. It localises to the host cytoplasm. Its subcellular location is the host nucleus. It is found in the host nucleolus. In terms of biological role, effector that enhances P.infestans colonization of Nicotiana benthamiana leaves. The chain is RxLR effector protein PITG_06094 from Phytophthora infestans (strain T30-4) (Potato late blight agent).